Reading from the N-terminus, the 334-residue chain is Probable allantoicase (334 aa).

This sequence belongs to the allantoicase family.

The enzyme catalyses allantoate + H2O = (S)-ureidoglycolate + urea. It functions in the pathway nitrogen metabolism; (S)-allantoin degradation; (S)-ureidoglycolate from allantoate (aminidohydrolase route): step 1/1. In Acinetobacter baylyi (strain ATCC 33305 / BD413 / ADP1), this protein is Probable allantoicase.